Consider the following 394-residue polypeptide: Bone morphogenetic protein 2 (394 aa).

Positions 1 to 19 (MVAGTRCLLVLLLPQVLLG) are cleaved as a signal peptide. Positions 20–280 (GAAGLIPELG…GHPLHKREKR (261 aa)) are cleaved as a propeptide — cleaved by PCSK5. Ser86 is modified (phosphoserine). 3 N-linked (GlcNAc...) asparagine glycosylation sites follow: Asn134, Asn162, and Asn198. The tract at residues 269–291 (GKGHPLHKREKRQAKHKQRKRLK) is disordered. Over residues 272–291 (HPLHKREKRQAKHKQRKRLK) the composition is skewed to basic residues. 3 disulfide bridges follow: Cys294–Cys359, Cys323–Cys391, and Cys327–Cys393. The N-linked (GlcNAc...) asparagine glycan is linked to Asn336.

This sequence belongs to the TGF-beta family. In terms of assembly, homodimer; disulfide-linked. Interacts with SOSTDC1. Interacts with GREM2, RGMA, RGMB and RGMC. Interacts with ASPN. Interacts with MAFP5. Interacts with FBN1 (via N-terminal domain) and FBN2. Interacts with type I receptor BMPR1A. Interacts with type II receptor BMPR2. Interacts with SCUBE3. Interacts with TNFAIP6 (primarily via Link domain); this interaction is inhibited by hyaluronan. Interacts with ERFE. Interacts with BMPR1A/ALK3; the interaction may induce HAMP expression. Forms heterodimers with BMP6 in vitro; the heterodimer then binds to its receptor BMPR1A /ALK3 and may induce HAMP expression. Interacts with TGFBR3.

The protein localises to the secreted. Growth factor of the TGF-beta superfamily that plays essential roles in many developmental processes, including cardiogenesis, neurogenesis, and osteogenesis. Induces cartilage and bone formation. Initiates the canonical BMP signaling cascade by associating with type I receptor BMPR1A and type II receptor BMPR2. Once all three components are bound together in a complex at the cell surface, BMPR2 phosphorylates and activates BMPR1A. In turn, BMPR1A propagates signal by phosphorylating SMAD1/5/8 that travel to the nucleus and act as activators and repressors of transcription of target genes. Also acts to promote expression of HAMP, via the interaction with its receptor BMPR1A/ALK3. Can also signal through non-canonical pathways such as ERK/MAP kinase signaling cascade that regulates osteoblast differentiation. Also stimulates the differentiation of myoblasts into osteoblasts via the EIF2AK3-EIF2A-ATF4 pathway by stimulating EIF2A phosphorylation which leads to increased expression of ATF4 which plays a central role in osteoblast differentiation. Acts as a positive regulator of odontoblast differentiation during mesenchymal tooth germ formation, expression is repressed during the bell stage by MSX1-mediated inhibition of CTNNB1 signaling. The sequence is that of Bone morphogenetic protein 2 (Bmp2) from Mus musculus (Mouse).